A 592-amino-acid polypeptide reads, in one-letter code: Membrane protein insertase YidC (592 aa).

5 consecutive transmembrane segments (helical) span residues 8–28 (LFIA…FVMG), 363–385 (ALGQ…MFPL), 430–450 (INPL…FALY), 493–513 (IWLI…GLTM), and 531–551 (IFAF…AGLV).

Belongs to the OXA1/ALB3/YidC family. Type 1 subfamily. In terms of assembly, interacts with the Sec translocase complex via SecD. Specifically interacts with transmembrane segments of nascent integral membrane proteins during membrane integration.

The protein resides in the cell inner membrane. Functionally, required for the insertion and/or proper folding and/or complex formation of integral membrane proteins into the membrane. Involved in integration of membrane proteins that insert both dependently and independently of the Sec translocase complex, as well as at least some lipoproteins. Aids folding of multispanning membrane proteins. The polypeptide is Membrane protein insertase YidC (Maricaulis maris (strain MCS10) (Caulobacter maris)).